Here is a 333-residue protein sequence, read N- to C-terminus: Ribosomal RNA small subunit methyltransferase H (333 aa).

S-adenosyl-L-methionine-binding positions include 36–38 (GGY), Asp-54, Phe-81, Asp-102, and Gln-109.

Belongs to the methyltransferase superfamily. RsmH family.

Its subcellular location is the cytoplasm. The enzyme catalyses cytidine(1402) in 16S rRNA + S-adenosyl-L-methionine = N(4)-methylcytidine(1402) in 16S rRNA + S-adenosyl-L-homocysteine + H(+). Its function is as follows. Specifically methylates the N4 position of cytidine in position 1402 (C1402) of 16S rRNA. The polypeptide is Ribosomal RNA small subunit methyltransferase H (Afipia carboxidovorans (strain ATCC 49405 / DSM 1227 / KCTC 32145 / OM5) (Oligotropha carboxidovorans)).